The following is a 313-amino-acid chain: MNRLAVELPGLSLKNPIMPASGCFGFGREYARFYDLSVLGAIMIKATTKEPRFGNPTPRVAETPGGMLNAIGLQNPGLDKVLEEELPWLEQFDVPIIANIAGSTVEEYVEVAEAISKAPNVHALELNISCPNVKKGGIAFGTVPDVAAELTRLVKEVAAVPVYVNVSPNVTDIVAMAKAIEQAGADGLTMINTLVGMRIDVKTGRPILANGTGGLSGPAVKPIAIRMIYEVSQAVSIPIIGMGGIQTAEDVLEFFYAGASAVAVGTANFVDPFVCPTIIADLPALLDDLGIGHISECIGRSWKTGAHAVHCRA.

FMN-binding positions include Ser-21 and 45–46 (KA). Substrate-binding positions include Lys-45 and 69 to 73 (NAIGL). The FMN site is built by Asn-99 and Asn-127. Position 127 (Asn-127) interacts with substrate. Cys-130 acts as the Nucleophile in catalysis. Ile-191 contributes to the FMN binding site. 192–193 (NT) is a substrate binding site. Residues Gly-217, 243 to 244 (GG), and 265 to 266 (GT) contribute to the FMN site.

It belongs to the dihydroorotate dehydrogenase family. Type 1 subfamily. Heterotetramer of 2 PyrK and 2 PyrD type B subunits. Requires FMN as cofactor.

The protein localises to the cytoplasm. It catalyses the reaction (S)-dihydroorotate + NAD(+) = orotate + NADH + H(+). It functions in the pathway pyrimidine metabolism; UMP biosynthesis via de novo pathway; orotate from (S)-dihydroorotate (NAD(+) route): step 1/1. Functionally, catalyzes the conversion of dihydroorotate to orotate with NAD(+) as electron acceptor. The chain is Dihydroorotate dehydrogenase B (NAD(+)), catalytic subunit (pyrD) from Bacillus caldolyticus.